The following is a 238-amino-acid chain: Splicing regulator RBM11 (238 aa).

The region spanning 10–87 is the RRM domain; sequence RTVFVGNLEA…RPINVQYRFG (78 aa). Positions 172-238 are disordered; that stretch reads ALNHSPGPEA…CRKCKKKKRY (67 aa). Positions 202–237 match the Bipartite nuclear localization signal motif; sequence NKRKRQRPDSDSDSSSEDKRGNEGSQKCRKCKKKKR. Over residues 228-238 the composition is skewed to basic residues; that stretch reads KCRKCKKKKRY.

In terms of assembly, homodimer. Selectively expressed in brain, cerebellum and testis, and to a lower extent in kidney.

The protein localises to the nucleus. It is found in the nucleoplasm. Its subcellular location is the nucleus speckle. Tissue-specific splicing factor with potential implication in the regulation of alternative splicing during neuron and germ cell differentiation. Antagonizes SRSF1-mediated BCL-X splicing. May affect the choice of alternative 5' splice sites by binding to specific sequences in exons and antagonizing the SR protein SRSF1. The polypeptide is Splicing regulator RBM11 (Rbm11) (Mus musculus (Mouse)).